We begin with the raw amino-acid sequence, 632 residues long: PTS system mannitol-specific EIICBA component (632 aa).

A PTS EIIC type-2 domain is found at 12 to 341 (FGRFLSNMIM…ILLKYDFNTI (330 aa)). Transmembrane regions (helical) follow at residues 24-45 (ISIF…WQPN), 50-70 (QLIS…TGGS), 134-155 (SLAI…PFIE), 165-185 (IQII…EPAK), 273-292 (LILG…GGLI), and 313-334 (FSNI…SILL). Positions 374-469 (KTIIVACDAG…KLVENMVFLY (96 aa)) constitute a PTS EIIB type-2 domain. Cys380 serves as the catalytic Phosphocysteine intermediate; for EIIB activity. Cys380 is modified (phosphocysteine; by EIIA). One can recognise a PTS EIIA type-2 domain in the interval 488–630 (FQLNEENIIL…KEALSLLTME (143 aa)). His548 acts as the Tele-phosphohistidine intermediate; for EIIA activity in catalysis. His548 carries the phosphohistidine; by HPr modification.

Homodimer. An intramolecular phosphotransfer takes places between His-548 and Cys-380.

The protein localises to the cell inner membrane. The enzyme catalyses D-mannitol(out) + N(pros)-phospho-L-histidyl-[protein] = D-mannitol 1-phosphate(in) + L-histidyl-[protein]. In terms of biological role, the phosphoenolpyruvate-dependent sugar phosphotransferase system (sugar PTS), a major carbohydrate active transport system, catalyzes the phosphorylation of incoming sugar substrates concomitantly with their translocation across the cell membrane. This system is involved in D-mannitol transport. This chain is PTS system mannitol-specific EIICBA component (mtlA), found in Buchnera aphidicola subsp. Acyrthosiphon pisum (strain APS) (Acyrthosiphon pisum symbiotic bacterium).